Here is a 1975-residue protein sequence, read N- to C-terminus: Golgi-specific brefeldin A-resistance guanine nucleotide exchange factor 1 homolog (1975 aa).

2 disordered regions span residues 216–243 and 299–352; these read NPTE…EPEN and ISAG…EEKM. Basic residues predominate over residues 221 to 230; the sequence is RQKRKKKRQL. One can recognise an SEC7 domain in the interval 624-812; sequence QIIEQKKRKR…ADMYQAIKTE (189 aa). Over residues 1264–1277 the composition is skewed to polar residues; it reads QSLRVGGDQQQQRM. Disordered stretches follow at residues 1264–1318, 1447–1473, 1699–1751, 1788–1854, and 1877–1975; these read QSLR…DLES, DEKA…VTED, IKDT…ATAQ, VHSG…QYAY, and YANQ…QEKP. Residues 1291–1309 are compositionally biased toward basic and acidic residues; that stretch reads GAHEERAYTSEGEERRRGG. Residues 1451–1464 show a composition bias toward basic residues; it reads VKKHHHHHHGHKKK. The span at 1734–1751 shows a compositional bias: low complexity; it reads SNSTAATSTSDPSIATAQ. Residues 1797 to 1808 show a composition bias toward pro residues; it reads GSPPQTEPPASS. Composition is skewed to low complexity over residues 1820–1854 and 1877–1894; these read YEQY…QYAY and YANQ…QQQH. The segment covering 1895–1909 has biased composition (polar residues); it reads PVNPTSPSVHGQYSV. A compositionally biased stretch (low complexity) spans 1938–1957; sequence TPPQNNAPALAPSAPTTTSA.

The protein resides in the golgi apparatus. It localises to the cis-Golgi network. It is found in the endoplasmic reticulum-Golgi intermediate compartment. Guanine-nucleotide exchange factor (GEF) for members of the Arf family of small GTPases involved in trafficking in the early secretory pathway; its GEF activity initiates the coating of nascent vesicles via the localized generation of activated ARFs through replacement of GDP with GTP. Also, plays a role in receptor-mediated endocytosis in oocytes and endosomal trafficking. Involved in vesicle retrograde transport from the ERGIC and cis-Golgi compartments to the endoplasmic reticulum (ER). Plays a role in maintaining mitochondrial morphology, network organization and function. May be required for the basolateral cell membrane localization of the serine threonine protein kinase sgk-1 in intestinal cells. The polypeptide is Golgi-specific brefeldin A-resistance guanine nucleotide exchange factor 1 homolog (Caenorhabditis elegans).